The chain runs to 343 residues: Phosphatidylglycerol--prolipoprotein diacylglyceryl transferase (343 aa).

A run of 4 helical transmembrane segments spans residues 22-42 (IPIR…LIIG), 54-74 (GVIY…GRLY), 97-117 (VWEG…GAWI), and 123-143 (GIPL…AQAI). Arginine 145 is an a 1,2-diacyl-sn-glycero-3-phospho-(1'-sn-glycerol) binding site. A run of 2 helical transmembrane segments spans residues 193 to 213 (VVHP…VLLI) and 257 to 277 (VNSF…LLAP). Positions 283–343 (PATLGGTPSS…SADNSGIVEK (61 aa)) are disordered. The segment covering 295–325 (GGDDTAETEATADTEDTEDTEDGVTDAPEAD) has biased composition (acidic residues).

This sequence belongs to the Lgt family.

Its subcellular location is the cell membrane. The enzyme catalyses L-cysteinyl-[prolipoprotein] + a 1,2-diacyl-sn-glycero-3-phospho-(1'-sn-glycerol) = an S-1,2-diacyl-sn-glyceryl-L-cysteinyl-[prolipoprotein] + sn-glycerol 1-phosphate + H(+). It participates in protein modification; lipoprotein biosynthesis (diacylglyceryl transfer). Functionally, catalyzes the transfer of the diacylglyceryl group from phosphatidylglycerol to the sulfhydryl group of the N-terminal cysteine of a prolipoprotein, the first step in the formation of mature lipoproteins. The protein is Phosphatidylglycerol--prolipoprotein diacylglyceryl transferase of Mycobacteroides abscessus (strain ATCC 19977 / DSM 44196 / CCUG 20993 / CIP 104536 / JCM 13569 / NCTC 13031 / TMC 1543 / L948) (Mycobacterium abscessus).